A 270-amino-acid chain; its full sequence is 3-methyl-2-oxobutanoate hydroxymethyltransferase (270 aa).

2 residues coordinate Mg(2+): Asp-41 and Asp-80. Residues 41 to 42 (DS), Asp-80, and Lys-109 each bind 3-methyl-2-oxobutanoate. Residue Glu-111 coordinates Mg(2+). Glu-178 acts as the Proton acceptor in catalysis.

It belongs to the PanB family. As to quaternary structure, homodecamer; pentamer of dimers. Requires Mg(2+) as cofactor.

It localises to the cytoplasm. The enzyme catalyses 3-methyl-2-oxobutanoate + (6R)-5,10-methylene-5,6,7,8-tetrahydrofolate + H2O = 2-dehydropantoate + (6S)-5,6,7,8-tetrahydrofolate. Its pathway is cofactor biosynthesis; (R)-pantothenate biosynthesis; (R)-pantoate from 3-methyl-2-oxobutanoate: step 1/2. In terms of biological role, catalyzes the reversible reaction in which hydroxymethyl group from 5,10-methylenetetrahydrofolate is transferred onto alpha-ketoisovalerate to form ketopantoate. The chain is 3-methyl-2-oxobutanoate hydroxymethyltransferase from Thermotoga neapolitana (strain ATCC 49049 / DSM 4359 / NBRC 107923 / NS-E).